The following is a 327-amino-acid chain: Protein EMSY-LIKE 1 (327 aa).

In terms of domain architecture, ENT spans 1 to 88 (METQIHQLEQ…HATIQPFDVL (88 aa)). Positions 32 to 58 (ESLITELRKELRVSDDEHRELLSRVNK) form a coiled coil. 2 disordered regions span residues 206–257 (GHGS…SDDI) and 305–327 (ADTS…MPQG). Residues 214 to 232 (GNRRGQIHGGRGRGPRIHQ) show a composition bias toward basic residues. The stretch at 281–306 (LELDKAKKMLKEHEQALIAAIARLAD) forms a coiled coil. A Phosphoserine modification is found at Ser308. Positions 318–327 (YSHDHPMPQG) are enriched in basic and acidic residues.

Isoform 1 interacts with EDM2 in nucleus.

It localises to the nucleus. Probably involved in the regulation of chromatin states. Contributes to RPP7-mediated and basal immunity, especially against Hyaloperonospora arabidopsidis isolate Hiks1. Regulates negatively EDM2-dependent floral transition. The chain is Protein EMSY-LIKE 1 from Arabidopsis thaliana (Mouse-ear cress).